Consider the following 259-residue polypeptide: UPF0246 protein PSHAa2558 (259 aa).

This sequence belongs to the UPF0246 family.

The sequence is that of UPF0246 protein PSHAa2558 from Pseudoalteromonas translucida (strain TAC 125).